Reading from the N-terminus, the 416-residue chain is Serine hydroxymethyltransferase (416 aa).

Residues L121 and 125 to 127 contribute to the (6S)-5,6,7,8-tetrahydrofolate site; that span reads GHL. The residue at position 229 (K229) is an N6-(pyridoxal phosphate)lysine.

It belongs to the SHMT family. As to quaternary structure, homodimer. Requires pyridoxal 5'-phosphate as cofactor.

The protein resides in the cytoplasm. It catalyses the reaction (6R)-5,10-methylene-5,6,7,8-tetrahydrofolate + glycine + H2O = (6S)-5,6,7,8-tetrahydrofolate + L-serine. The protein operates within one-carbon metabolism; tetrahydrofolate interconversion. It participates in amino-acid biosynthesis; glycine biosynthesis; glycine from L-serine: step 1/1. Functionally, catalyzes the reversible interconversion of serine and glycine with tetrahydrofolate (THF) serving as the one-carbon carrier. This reaction serves as the major source of one-carbon groups required for the biosynthesis of purines, thymidylate, methionine, and other important biomolecules. Also exhibits THF-independent aldolase activity toward beta-hydroxyamino acids, producing glycine and aldehydes, via a retro-aldol mechanism. The polypeptide is Serine hydroxymethyltransferase (Bordetella avium (strain 197N)).